Consider the following 65-residue polypeptide: Large ribosomal subunit protein bL28 (65 aa).

The segment at 1–26 (MARRDALTGKSALSGQSRSHALNATK) is disordered. Polar residues predominate over residues 11–22 (SALSGQSRSHAL).

Belongs to the bacterial ribosomal protein bL28 family.

In Mycoplasma mycoides subsp. mycoides SC (strain CCUG 32753 / NCTC 10114 / PG1), this protein is Large ribosomal subunit protein bL28.